The chain runs to 98 residues: UPF0175 protein VNG_0066H (98 aa).

This sequence belongs to the UPF0175 family.

The protein is UPF0175 protein VNG_0066H of Halobacterium salinarum (strain ATCC 700922 / JCM 11081 / NRC-1) (Halobacterium halobium).